The chain runs to 155 residues: Ribosomal RNA large subunit methyltransferase H (155 aa).

Residues leucine 73, glycine 104, and 123–128 each bind S-adenosyl-L-methionine; that span reads LSRMTF.

Belongs to the RNA methyltransferase RlmH family. As to quaternary structure, homodimer.

Its subcellular location is the cytoplasm. The catalysed reaction is pseudouridine(1915) in 23S rRNA + S-adenosyl-L-methionine = N(3)-methylpseudouridine(1915) in 23S rRNA + S-adenosyl-L-homocysteine + H(+). Its function is as follows. Specifically methylates the pseudouridine at position 1915 (m3Psi1915) in 23S rRNA. In Methylococcus capsulatus (strain ATCC 33009 / NCIMB 11132 / Bath), this protein is Ribosomal RNA large subunit methyltransferase H.